Consider the following 281-residue polypeptide: MNPYIEILRPVNAVMAVITVMLMALITGRFDFSVLLASVVVFTATGAGNVINDYFDHEIDAINRPERPIPSGRISRGVAGVYSIILFALASLMGFYLGLLPGLVVVSSSLLMVYYAWRLKKRCLVGNITISFLTGLSFVFGGIVLGEVRASILLGFYAFLMTMAREIVKDMEDVEGDRAEGATTLPITHGMRISGVLAASFMLIASLTSPSLYLLGIFSALYIPVLLLAVAVFLRAAIMILRGQDRATASRVSRMIKVGMALTFIAFAAGSGTITALTGLS.

The next 8 membrane-spanning stretches (helical) occupy residues 7 to 27 (ILRP…ALIT), 32 to 52 (FSVL…NVIN), 72 to 91 (GRIS…ALAS), 95 to 117 (FYLG…YYAW), 128 to 148 (ITIS…LGEV), 193 to 213 (ISGV…PSLY), 214 to 234 (LLGI…AVFL), and 258 to 278 (VGMA…TALT).

This sequence belongs to the UbiA prenyltransferase family. DGGGP synthase subfamily. Requires Mg(2+) as cofactor.

The protein resides in the cell membrane. The enzyme catalyses sn-3-O-(geranylgeranyl)glycerol 1-phosphate + (2E,6E,10E)-geranylgeranyl diphosphate = 2,3-bis-O-(geranylgeranyl)-sn-glycerol 1-phosphate + diphosphate. The protein operates within membrane lipid metabolism; glycerophospholipid metabolism. Functionally, prenyltransferase that catalyzes the transfer of the geranylgeranyl moiety of geranylgeranyl diphosphate (GGPP) to the C2 hydroxyl of (S)-3-O-geranylgeranylglyceryl phosphate (GGGP). This reaction is the second ether-bond-formation step in the biosynthesis of archaeal membrane lipids. In Methanothermobacter thermautotrophicus (strain ATCC 29096 / DSM 1053 / JCM 10044 / NBRC 100330 / Delta H) (Methanobacterium thermoautotrophicum), this protein is Digeranylgeranylglyceryl phosphate synthase.